Here is a 230-residue protein sequence, read N- to C-terminus: Cytidylate kinase (230 aa).

12 to 20 is an ATP binding site; it reads GPSGAGKGT.

It belongs to the cytidylate kinase family. Type 1 subfamily.

It is found in the cytoplasm. It catalyses the reaction CMP + ATP = CDP + ADP. It carries out the reaction dCMP + ATP = dCDP + ADP. The sequence is that of Cytidylate kinase from Shewanella pealeana (strain ATCC 700345 / ANG-SQ1).